The sequence spans 837 residues: MVKVKSKKNSLTSSLDNKIVDLIYRLLEEKTLDRKRSLRQESQGEEGENNEGEEDEDIFESMFFAKDLTAGEIFTFCLTKDLSLQRVKKVVLQKTIDRMLKDVIESELEEFGSYPGYNNEEEEKPSLEEELAKKNMMIERDTNEMNKRITSTWSKSGSVSESITETDDPKTEEVKKSKKRSKEGTCKVKRQKIKEDRSPPNSSLKSLGGMDDVVAQLMELIGLPILHPEIFLSTGVEPPRGVLLHGPPGCGKTSIANALAGELQVPFISISAPSVVSGMSGESEKKIRDLFDEARSLAPCLVFFDEIDAITPKRDGGAQREMERRIVAQLLTSMDELTMEKTNGKPVIIIGATNRPDSLDAALRRAGRFDREICLNVPNEVSRLHILKKMSDNLKIDGAIDFAKLAKLTPGFVGADLKALVTAAGTCAIKRIFQTYANIKSTPTTATDSSEDNMEIDETANGDESSLKNTANMIDPLPLSVVQQFIRNYPEPLSGEQLSLLSIKYEDFLKALPTIQPTAKREGFATVPDVTWANVGALQRVRLELNMAIVQPIKRPELYEKVGISAPGGVLLWGPPGCGKTLLAKAVANESRANFISIKGPELLNKYVGESERSIRQVFTRARASVPCVIFFDELDALVPRRDTSLSESSSRVVNTLLTELDGLNDRRGIFVIGATNRPDMIDPAMLRPGRLDKSLFIELPNTEEKLDIIKTLTKSHGTPLSSDVDFEEIIRNEKCNNFSGADLAALVRESSVLALKRKFFQSEEIQSVLDNDLDKEFEDLSVGVSGEEIIVTMSDFRSALRKIKPSVSDKDRLKYDRLNKKMGLTEEMKDAEEMKQ.

Disordered regions lie at residues 36–56 and 149–207; these read RSLR…EEDE and ITST…LKSL. Ser42 carries the post-translational modification Phosphoserine. The span at 43-56 shows a compositional bias: acidic residues; it reads QGEEGENNEGEEDE. A compositionally biased stretch (polar residues) spans 149–163; sequence ITSTWSKSGSVSESI. Residues 176 to 192 are compositionally biased toward basic residues; that stretch reads KSKKRSKEGTCKVKRQK. 246–253 provides a ligand contact to ATP; sequence GPPGCGKT. Residues 443-468 are disordered; the sequence is PTTATDSSEDNMEIDETANGDESSLK. A compositionally biased stretch (acidic residues) spans 449–461; the sequence is SSEDNMEIDETAN. An ATP-binding site is contributed by 574 to 581; it reads GPPGCGKT.

The protein belongs to the AAA ATPase family.

Its subcellular location is the nucleus. It localises to the nucleolus. Involved in ribosome biogenesis. Seems to be required for restructuring nucleoplasmic 60S pre-ribosomal particles to make them competent for nuclear export. In Saccharomyces cerevisiae (strain ATCC 204508 / S288c) (Baker's yeast), this protein is Ribosome biogenesis ATPase RIX7 (RIX7).